A 169-amino-acid chain; its full sequence is S-ribosylhomocysteine lyase (169 aa).

Fe cation contacts are provided by histidine 54, histidine 58, and cysteine 128.

Belongs to the LuxS family. In terms of assembly, homodimer. Fe cation is required as a cofactor.

It catalyses the reaction S-(5-deoxy-D-ribos-5-yl)-L-homocysteine = (S)-4,5-dihydroxypentane-2,3-dione + L-homocysteine. Its function is as follows. Involved in the synthesis of autoinducer 2 (AI-2) which is secreted by bacteria and is used to communicate both the cell density and the metabolic potential of the environment. The regulation of gene expression in response to changes in cell density is called quorum sensing. Catalyzes the transformation of S-ribosylhomocysteine (RHC) to homocysteine (HC) and 4,5-dihydroxy-2,3-pentadione (DPD). The polypeptide is S-ribosylhomocysteine lyase (Shewanella sp. (strain ANA-3)).